Here is a 109-residue protein sequence, read N- to C-terminus: Parvalbumin beta (109 aa).

The residue at position 2 (Ala2) is an N-acetylalanine. The igE-binding stretch occupies residues 22–41 (AGSFDHKKFFKACGLSGKST). 2 EF-hand domains span residues 39–74 (KSTD…FKAG) and 78–109 (LSDA…MIKG). Ca(2+)-binding residues include Asp52, Asp54, Ser56, Phe58, Glu60, Glu63, Asp91, Asp93, Asp95, Lys97, and Glu102.

It belongs to the parvalbumin family. Post-translationally, the N-terminus is blocked. In terms of tissue distribution, expressed in both white and dark muscles (at protein level). About eight and a half times lower expression in the dark muscle than in the white muscle (at protein level).

In muscle, parvalbumin is thought to be involved in relaxation after contraction. It binds two calcium ions. The sequence is that of Parvalbumin beta from Scomber japonicus (Chub mackerel).